The sequence spans 902 residues: MTRRRSTSGTSSRSSTDSGLSVDTAYLEDNKHNNFANGTSGLTDETKYRDVEDAEADVDEPFLPTSSKKLGSGSRTRQIFWALVILCLGGWVLALVLFLTHGRASSQTASETLQQQESDSGSTSAGRPVTLQQVLTGSWNPRAHAISWIAGPDGEDGLLVQRAEVDKEGYMRVDDIRSQEGDDVDSQSGRILIDKAAVRVNGETLMPTFTWPSPDLNKVLLMSNHEKNWRYSFTGRYWIFDVATQTAQPLDPSVPDGRVQLALWSPSSDAVVFVRDNNMYLRKLSSESVVSITKDGGEDLFYGIPDWVYEEEVITDKSVTWWSNDGKYVAFLRTNESAVPEFPVQYFVSRPSGKRPPPGLENYPEVRQIKYPKAGSPNPVVNLLFYDVEKDEVFPVDVPDDFPDDDRIIIEVLWASEGKVIVRATNRESDRVKVFLIDTKSRTGKLVRFEDIANLDGGWVEPSHYTKFIPADPSNGRPDDGYIDTVIHDGYDHLAYFTPLDNPDPIMLTTGEWEVVEAPSAVDLRRGIVYFVATKESPTQRHVYRVHLDGSNLQALTDTSKPGFYDVSFSDGAGYALLSYNGPSVPWQAIINTGGDEITFEKTIEKNPRLASMVETYALPTEIYQNVTIDGFTLQLVERRPPHFNPAKKYPVVFQLYNGPTSQRVDRKFTIDFQSYIASNLGYIVVTLDARGTGYSGRKVRCAVRGNLGHYEAHDQITTAKMWAKKPYVDETRMAIWGWSYGGFMTLKVLEQDAGETFQYGMAVAPVTDWRFYDSVYTERYMHTPEHNPSGYENSTITNVSALSKATRFLLIHGASDDNVHIQNTLTFVDKLDLLNVQNYDMHFYPDSDHNIYFHNAHFMIYERLSNWLINAFNGEWHQIANPVPEDSIWDSVKRSVPAFAH.

2 disordered regions span residues 1–23 (MTRRRSTSGTSSRSSTDSGLSVD) and 53–72 (DAEADVDEPFLPTSSKKLGS). Residues 1–78 (MTRRRSTSGT…KLGSGSRTRQ (78 aa)) are Cytoplasmic-facing. The span at 7 to 21 (TSGTSSRSSTDSGLS) shows a compositional bias: low complexity. Residues 79–99 (IFWALVILCLGGWVLALVLFL) form a helical; Signal-anchor for type II membrane protein membrane-spanning segment. Residues 100 to 902 (THGRASSQTA…VKRSVPAFAH (803 aa)) are Vacuolar-facing. Asn335 and Asn626 each carry an N-linked (GlcNAc...) asparagine glycan. Ser740 functions as the Charge relay system in the catalytic mechanism. Residues Asn794 and Asn799 are each glycosylated (N-linked (GlcNAc...) asparagine). Active-site charge relay system residues include Asp817 and His850.

This sequence belongs to the peptidase S9B family.

It localises to the vacuole membrane. It carries out the reaction Release of an N-terminal dipeptide, Xaa-Yaa-|-Zaa-, from a polypeptide, preferentially when Yaa is Pro, provided Zaa is neither Pro nor hydroxyproline.. Its function is as follows. Type IV dipeptidyl-peptidase which removes N-terminal dipeptides sequentially from polypeptides having unsubstituted N-termini provided that the penultimate residue is proline. The polypeptide is Probable dipeptidyl-aminopeptidase B (dapB) (Aspergillus oryzae (strain ATCC 42149 / RIB 40) (Yellow koji mold)).